Here is a 511-residue protein sequence, read N- to C-terminus: Alpha-amylase 1A (511 aa).

The signal sequence occupies residues 1-15 (MKLFWLLFTIGFCWA). The residue at position 16 (glutamine 16) is a Pyrrolidone carboxylic acid. 3 disulfide bridges follow: cysteine 43–cysteine 101, cysteine 85–cysteine 130, and cysteine 156–cysteine 175. Ca(2+)-binding residues include asparagine 115, arginine 173, and aspartate 182. Arginine 210 serves as a coordination point for chloride. Aspartate 212 acts as the Nucleophile in catalysis. Residue histidine 216 participates in Ca(2+) binding. Glutamate 248 serves as the catalytic Proton donor. Asparagine 313 and arginine 352 together coordinate chloride. Residue asparagine 365 is modified to Deamidated asparagine; partial. Cysteine 393 and cysteine 399 are oxidised to a cystine. Asparagine 427 carries the post-translational modification Deamidated asparagine; partial; alternate. Asparagine 427 carries N-linked (GlcNAc...) asparagine glycosylation. Cysteines 465 and 477 form a disulfide. Deamidated asparagine; partial is present on asparagine 474. A glycan (N-linked (GlcNAc...) asparagine) is linked at asparagine 476.

It belongs to the glycosyl hydrolase 13 family. Monomer. Ca(2+) is required as a cofactor. Chloride serves as cofactor.

It localises to the secreted. The enzyme catalyses Endohydrolysis of (1-&gt;4)-alpha-D-glucosidic linkages in polysaccharides containing three or more (1-&gt;4)-alpha-linked D-glucose units.. Functionally, calcium-binding enzyme that initiates starch digestion in the oral cavity. Catalyzes the hydrolysis of internal (1-&gt;4)-alpha-D-glucosidic bonds, yielding a mixture of maltose, isomaltose, small amounts of glucose as well as small linear and branched oligosaccharides called dextrins. In Homo sapiens (Human), this protein is Alpha-amylase 1A.